Reading from the N-terminus, the 100-residue chain is Small ribosomal subunit protein uS14c (100 aa).

The protein belongs to the universal ribosomal protein uS14 family. Component of the chloroplast small ribosomal subunit (SSU). Mature 70S chloroplast ribosomes of higher plants consist of a small (30S) and a large (50S) subunit. The 30S small subunit contains 1 molecule of ribosomal RNA (16S rRNA) and 24 different proteins. The 50S large subunit contains 3 rRNA molecules (23S, 5S and 4.5S rRNA) and 33 different proteins.

It is found in the plastid. It localises to the chloroplast. Functionally, component of the chloroplast ribosome (chloro-ribosome), a dedicated translation machinery responsible for the synthesis of chloroplast genome-encoded proteins, including proteins of the transcription and translation machinery and components of the photosynthetic apparatus. The sequence is that of Small ribosomal subunit protein uS14c from Spinacia oleracea (Spinach).